We begin with the raw amino-acid sequence, 912 residues long: MADDKSLLARFYHADRALTAVASELDSFDGRAEPVRCTRLVGRLRQGQDRVLAITNQIMDELLGDDRAPRAFRAKFPEEVLQESLAGQLWFGAECLAAGSSIMNREVESGVMRPLAKAVTKSLDNVRNLLREQCLRNNTPNSLTLRLDINDAATEQLYESLKIFDRLFAEFELLYVSAMVQVKSKQEYEMQELICVLFSETLQRALKIGLLEQEQVDSYDPALMFSIPRLAIVAGLVIFKDGPLNMDQPADNISEMFRPFRKLLIKMRDLLRTLTKHELYQLEKLLCTNEEISLKEELICDANENDSSDVLPQEDHVVIVTTNVNTSNNSDNSDSRVDDSPNDELRHESETRDNRNSSFYSNRIIDSNRLHADVEDDVSENDDDDDPSNVLKDSLVTTDCASGYLIPNTNFGNLLQTNEAPLTDSFIATDEELKLGTSSNARIEQILSETNQKLADSGLGTANPSVDNSPELDTERPITSRSACESSEEGEIDEYDNEEDDEDSDNNLSNQQLMDPGSSAGTSQSAGKPYRTHKQQHHHRHRRSSGSIMSATSSRKYNSKHHKASASASVIVPSNQGTSSKTYSNCDTSPSSGNQSECSSTSSTTGESSQDVAMAIRAAGRIKFKTTENLLHRLFVCIAGVADQLQTNFAADLRQMLKSVFIINSSPPEPEEPPELAPTSSDKPKEPDPTDLFEFRASEQDVITPGQNSGGSSQSIYSAEEVNPEDPHDSVFGSPGTSPIRASSAPRTMMTTAESGGVTVNVSVSVVTGGGSSSSRNVQERSVSLSETSIVVENNGGATDSNLRDSHRRHSAIGSKGEYGRSRSSPNSPVNGTSAEERRMPEAPPRWIPDGDAPRCMACASSFTPFRRRHHCRNCGGVFCGVCSSASAPLPKYGLTKAVRVCRDCYVREVGT.

Low complexity predominate over residues 323–332 (NVNTSNNSDN). 4 disordered regions span residues 323–360 (NVNT…SSFY), 455–610 (ADSG…ESSQ), 664–745 (NSSP…ASSA), and 769–846 (GGGS…APPR). Residues 333 to 355 (SDSRVDDSPNDELRHESETRDNR) show a composition bias toward basic and acidic residues. A compositionally biased stretch (polar residues) spans 455–468 (ADSGLGTANPSVDN). Positions 486–505 (SSEEGEIDEYDNEEDDEDSD) are enriched in acidic residues. Basic residues predominate over residues 530-544 (YRTHKQQHHHRHRRS). 2 stretches are compositionally biased toward polar residues: residues 545-556 (SGSIMSATSSRK) and 572-590 (VPSN…DTSP). Residues 591–610 (SSGNQSECSSTSSTTGESSQ) are compositionally biased toward low complexity. A compositionally biased stretch (basic and acidic residues) spans 682 to 699 (DKPKEPDPTDLFEFRASE). Polar residues-rich tracts occupy residues 705-717 (PGQN…QSIY), 735-745 (PGTSPIRASSA), 780-801 (ERSV…ATDS), and 822-834 (SRSS…NGTS). The segment at 850–910 (DGDAPRCMAC…VCRDCYVREV (61 aa)) adopts an FYVE-type zinc-finger fold. Zn(2+) contacts are provided by cysteine 856, cysteine 859, cysteine 872, cysteine 875, cysteine 880, cysteine 883, cysteine 902, and cysteine 905.

It belongs to the lst-2 family.

In terms of biological role, negative regulator of epidermal growth factor receptor (EGFR) signaling. The protein is Lateral signaling target protein 2 homolog of Aedes aegypti (Yellowfever mosquito).